Reading from the N-terminus, the 309-residue chain is MTAENQSTVTEFILGGLTNRPELQLPLFLLFLGIYVVTMVGNLGMITLIGLNSQLHTPMYFFLSNLSLVDLCYSSVITPKMLINFVSQRNLISYVGCMSQLYFFLVFVIAECYMLTVMAYDRYVAICQPLLYNIIMSPALCSLLVAFVYAVGLIGSAIETGLMLKLNYCEDLISHYFCDILPLMKLSCSSTYDVEMAVFFLAGFDIIVTSLTVLISYAFILSSILRISSNEGRSKAFSTCSSHFAAVGLFYGSTAFMYLKPSTASSLAQENVASVFYTTVIPMFNPLIYSLRNKEVKTALDKTLRRKVF.

Residues 1-28 (MTAENQSTVTEFILGGLTNRPELQLPLF) lie on the Extracellular side of the membrane. A helical membrane pass occupies residues 29 to 49 (LLFLGIYVVTMVGNLGMITLI). At 50 to 56 (GLNSQLH) the chain is on the cytoplasmic side. Residues 57–77 (TPMYFFLSNLSLVDLCYSSVI) form a helical membrane-spanning segment. At 78–90 (TPKMLINFVSQRN) the chain is on the extracellular side. Residues 91 to 111 (LISYVGCMSQLYFFLVFVIAE) form a helical membrane-spanning segment. The cysteines at positions 97 and 188 are disulfide-linked. The Cytoplasmic portion of the chain corresponds to 112–133 (CYMLTVMAYDRYVAICQPLLYN). Residues 134-154 (IIMSPALCSLLVAFVYAVGLI) traverse the membrane as a helical segment. Over 155-195 (GSAIETGLMLKLNYCEDLISHYFCDILPLMKLSCSSTYDVE) the chain is Extracellular. A helical transmembrane segment spans residues 196–216 (MAVFFLAGFDIIVTSLTVLIS). Topologically, residues 217–238 (YAFILSSILRISSNEGRSKAFS) are cytoplasmic. The helical transmembrane segment at 239 to 259 (TCSSHFAAVGLFYGSTAFMYL) threads the bilayer. Residues 260–270 (KPSTASSLAQE) are Extracellular-facing. The helical transmembrane segment at 271–291 (NVASVFYTTVIPMFNPLIYSL) threads the bilayer. Topologically, residues 292 to 309 (RNKEVKTALDKTLRRKVF) are cytoplasmic.

The protein belongs to the G-protein coupled receptor 1 family.

The protein localises to the cell membrane. Odorant receptor. The protein is Olfactory receptor 8A1 of Mus musculus (Mouse).